A 411-amino-acid polypeptide reads, in one-letter code: Snake venom metalloproteinase VMP1 (411 aa).

Positions 1–20 (MIQVLLVTICLAAFPYQGSS) are cleaved as a signal peptide. A propeptide spanning residues 21–189 (IILESGNVND…KKAFQLNLTP (169 aa)) is cleaved from the precursor. Residues 197–393 (RYVELVIIAD…KNPQCILNKP (197 aa)) enclose the Peptidase M12B domain. Ca(2+)-binding residues include Glu-200 and Asp-284. Cystine bridges form between Cys-308–Cys-388, Cys-348–Cys-372, and Cys-350–Cys-355. N-linked (GlcNAc...) asparagine glycosylation is present at Asn-311. His-333 contacts Zn(2+). Glu-334 is a catalytic residue. Zn(2+)-binding residues include His-337 and His-343. Cys-388, Asn-391, Val-403, Asn-406, Leu-408, and Glu-410 together coordinate Ca(2+).

The protein belongs to the venom metalloproteinase (M12B) family. P-I subfamily. As to quaternary structure, monomer. Requires Zn(2+) as cofactor. As to expression, expressed by the venom gland.

It localises to the secreted. Inhibited by EDTA and 1,10-phenanthroline, but not by PMSF. This venom zinc protease has fibrinolytic activity. The recombinant enzyme cleaves both alpha- (FGA) and beta-chains (FGB) of fibrinogen, but not the gamma-chain. The recombinant protein does not produce hemorrhage in mice and does not have effect on ADP- or collagen-stimulated platelet aggregation. This is Snake venom metalloproteinase VMP1 from Agkistrodon piscivorus leucostoma (Western cottonmouth).